Reading from the N-terminus, the 211-residue chain is Hypoxanthine-guanine phosphoribosyltransferase (211 aa).

Residues 1–20 form a disordered region; it reads MSNSAKSPSGPVGDEGRRNY. GMP is bound by residues Lys-66, 125 to 133, Lys-157, and Asp-185; that span reads EDIVDSAIT. Asp-129 (proton acceptor) is an active-site residue. Asp-185 lines the Mg(2+) pocket.

The protein belongs to the purine/pyrimidine phosphoribosyltransferase family. The cofactor is Mg(2+).

The protein resides in the cytoplasm. The enzyme catalyses IMP + diphosphate = hypoxanthine + 5-phospho-alpha-D-ribose 1-diphosphate. The catalysed reaction is GMP + diphosphate = guanine + 5-phospho-alpha-D-ribose 1-diphosphate. Its pathway is purine metabolism; IMP biosynthesis via salvage pathway; IMP from hypoxanthine: step 1/1. In terms of biological role, converts guanine to guanosine monophosphate, and hypoxanthine to inosine monophosphate. Transfers the 5-phosphoribosyl group from 5-phosphoribosylpyrophosphate onto the purine. Plays a central role in the generation of purine nucleotides through the purine salvage pathway. The protein is Hypoxanthine-guanine phosphoribosyltransferase of Leishmania donovani.